The chain runs to 433 residues: MKLFGSSGIRGITNKEVTTDLALKVGLALGKTKRSAVVGRDPRIAGEMIEHAIISGLLSAGCDVVRIGMVSTPTLAYATKDYDCGVMITASHNPAEYVGIKLWNPDGMAFDSSQQEEIEECIEKEDFEPVNWDQIGNVSEDANAIRQHTNMILQNVKRSSKRVIIDCGCGAGSTITPYVLRKMGCEVITLNSQPDGYFPARNPEPNDTNLTLLKIAVKEFGADIGIAQDGDADRMMAIDEKGEFITGDEMLALFARHECDEGAIIVVPVDTSMMVDDALPGSTVIRTRVGDVYVAEEIKRCNADIGGEPSGSWIFPKISYCPDGIFASAKIMELIENRTLSELKKELPHYPTYRGTVKCDNERKAHVMEVVHSKLEKCGKISDIDGIRVEMDNGWVLVRPSGTEPKIRITAEAREGADRLFSMAENIIKEALN.

The active-site Phosphoserine intermediate is the Ser91. 4 residues coordinate Mg(2+): Ser91, Asp229, Asp231, and Asp233. Ser91 bears the Phosphoserine mark.

Belongs to the phosphohexose mutase family. The cofactor is Mg(2+). Post-translationally, activated by phosphorylation.

The enzyme catalyses alpha-D-glucosamine 1-phosphate = D-glucosamine 6-phosphate. Its function is as follows. Catalyzes the conversion of glucosamine-6-phosphate to glucosamine-1-phosphate. The protein is Probable phosphoglucosamine mutase of Methanococcoides burtonii (strain DSM 6242 / NBRC 107633 / OCM 468 / ACE-M).